The sequence spans 220 residues: Glycerol-3-phosphate acyltransferase (220 aa).

The next 6 membrane-spanning stretches (helical) occupy residues 11–31 (INVIFTLLGYLIGGIPFGYAL), 70–90 (LLVLILDLFKGMFAVFLSKLF), 96–116 (LQWMVAIASILGHCYSPFLNF), 127–147 (GSVVLLIPIESLIGLTVWFFV), 153–173 (ISSLASILGVGTATVLIFFVP), and 193–213 (MVLIFIFTLIKHAGNIFNLLA).

The protein belongs to the PlsY family. As to quaternary structure, probably interacts with PlsX.

Its subcellular location is the cell inner membrane. The enzyme catalyses an acyl phosphate + sn-glycerol 3-phosphate = a 1-acyl-sn-glycero-3-phosphate + phosphate. Its pathway is lipid metabolism; phospholipid metabolism. Functionally, catalyzes the transfer of an acyl group from acyl-phosphate (acyl-PO(4)) to glycerol-3-phosphate (G3P) to form lysophosphatidic acid (LPA). This enzyme utilizes acyl-phosphate as fatty acyl donor, but not acyl-CoA or acyl-ACP. The sequence is that of Glycerol-3-phosphate acyltransferase from Helicobacter pylori (strain ATCC 700392 / 26695) (Campylobacter pylori).